The following is a 601-amino-acid chain: Potassium channel KAT2 (601 aa).

Over 1–42 (METISNIFHNDPLPPLGARANQSIKLRKFIISPYDSRYRTWE) the chain is Cytoplasmic. Residues 43 to 63 (TFLLVLVVYSAWICPFELAYL) traverse the membrane as a helical segment. Residues 64 to 71 (RNLSWKVS) lie on the Extracellular side of the membrane. The helical transmembrane segment at 72-92 (LVDNIIDSFFAIDIILTFFLA) threads the bilayer. Residues 93–112 (YLDQKSYLLVDDPKRIVARY) lie on the Cytoplasmic side of the membrane. A helical membrane pass occupies residues 113–133 (FSSWFLFDVCSTIPYQLLGQI). Topologically, residues 134-144 (FKKHENGLAYR) are extracellular. The chain crosses the membrane as a helical; Voltage-sensor span at residues 145–165 (LLSMLRLWRLRRLSELFARLE). Topologically, residues 166–179 (KDIRLNYYWIRCTK) are cytoplasmic. Residues 180–200 (LISVTLFAVHCSGCFNYLIAD) traverse the membrane as a helical segment. Residues 201–227 (RYPNPARTWIGAAIPNYRSQNLWVRYV) lie on the Extracellular side of the membrane. The segment at residues 228-247 (TAIYWSITTLTTTGYGDLHA) is an intramembrane region (pore-forming). The Extracellular portion of the chain corresponds to 248 to 251 (ENQR). A helical transmembrane segment spans residues 252-272 (EMLFSICYMLFNLGLTAYLIG). Over 273–601 (NMTNLVVQGS…DGDHLFFMEI (329 aa)) the chain is Cytoplasmic. 356–475 (LFHGVSFTCM…RVILNNLSQK (120 aa)) contributes to the a nucleoside 3',5'-cyclic phosphate binding site. A KHA domain is found at 530–601 (RVTIHMYSQR…DGDHLFFMEI (72 aa)).

Belongs to the potassium channel family. Plant (TC 1.A.1.4) subfamily.

Its subcellular location is the membrane. Probable inward-rectifying potassium channel. Assuming opened or closed conformations in response to the voltage difference across the membrane, the channel is activated by hyperpolarization. In Oryza sativa subsp. japonica (Rice), this protein is Potassium channel KAT2.